The primary structure comprises 526 residues: Glutamyl-tRNA(Gln) amidotransferase subunit A, mitochondrial (526 aa).

Lys-76 serves as the catalytic Charge relay system. Residues 147–166 (QYREKRKQNSHSENEDSNWL) are disordered. Catalysis depends on Ser-171, which acts as the Charge relay system. Residue Ser-195 is the Acyl-ester intermediate of the active site.

This sequence belongs to the amidase family. GatA subfamily. In terms of assembly, subunit of the heterotrimeric GatCAB amidotransferase (AdT) complex, composed of A (QRSL1), B (GATB) and C (GATC) subunits.

The protein resides in the mitochondrion. The enzyme catalyses L-glutamyl-tRNA(Gln) + L-glutamine + ATP + H2O = L-glutaminyl-tRNA(Gln) + L-glutamate + ADP + phosphate + H(+). Its function is as follows. Allows the formation of correctly charged Gln-tRNA(Gln) through the transamidation of misacylated Glu-tRNA(Gln) in the mitochondria. The reaction takes place in the presence of glutamine and ATP through an activated gamma-phospho-Glu-tRNA(Gln). In Bos taurus (Bovine), this protein is Glutamyl-tRNA(Gln) amidotransferase subunit A, mitochondrial.